Here is a 182-residue protein sequence, read N- to C-terminus: Homeobox expressed in ES cells 1-A (182 aa).

The homeobox DNA-binding region spans 103 to 163 (YRGRRPRTAF…QNRRAKLKRS (61 aa)).

It belongs to the ANF homeobox family. In terms of tissue distribution, initially expressed in the anterior dorsal region of early embryos and later exclusively in the primordium of the anterior pituitary gland.

The protein localises to the nucleus. In terms of biological role, appears to be involved in the regional specification of the anterior head of Xenopus embryos. This is Homeobox expressed in ES cells 1-A (hesx1-a) from Xenopus laevis (African clawed frog).